The chain runs to 353 residues: sn-glycerol-3-phosphate import ATP-binding protein UgpC (353 aa).

The region spanning isoleucine 4–isoleucine 234 is the ABC transporter domain. Glycine 36 to serine 43 contributes to the ATP binding site.

Belongs to the ABC transporter superfamily. sn-glycerol-3-phosphate importer (TC 3.A.1.1.3) family. In terms of assembly, the complex is composed of two ATP-binding proteins (UgpC), two transmembrane proteins (UgpA and UgpE) and a solute-binding protein (UgpB).

Its subcellular location is the cell inner membrane. It catalyses the reaction sn-glycerol 3-phosphate(out) + ATP + H2O = sn-glycerol 3-phosphate(in) + ADP + phosphate + H(+). In terms of biological role, part of the ABC transporter complex UgpBAEC involved in sn-glycerol-3-phosphate (G3P) import. Responsible for energy coupling to the transport system. The chain is sn-glycerol-3-phosphate import ATP-binding protein UgpC from Paracoccus denitrificans (strain Pd 1222).